Consider the following 157-residue polypeptide: Ribosomal RNA large subunit methyltransferase H (157 aa).

S-adenosyl-L-methionine is bound by residues L74, G106, and 125 to 130; that span reads LSDMTL.

It belongs to the RNA methyltransferase RlmH family. Homodimer.

The protein resides in the cytoplasm. The catalysed reaction is pseudouridine(1915) in 23S rRNA + S-adenosyl-L-methionine = N(3)-methylpseudouridine(1915) in 23S rRNA + S-adenosyl-L-homocysteine + H(+). In terms of biological role, specifically methylates the pseudouridine at position 1915 (m3Psi1915) in 23S rRNA. The sequence is that of Ribosomal RNA large subunit methyltransferase H from Desulfovibrio desulfuricans (strain ATCC 27774 / DSM 6949 / MB).